We begin with the raw amino-acid sequence, 258 residues long: Putative [LysW]-aminoadipate/[LysW]-glutamate kinase (258 aa).

Residues 33–34 (GG), Arg-60, and Asn-164 each bind substrate.

The protein belongs to the acetylglutamate kinase family. LysZ subfamily.

The protein localises to the cytoplasm. The enzyme catalyses [amino-group carrier protein]-C-terminal-N-(1,4-dicarboxybutan-1-yl)-L-glutamine + ATP = [amino-group carrier protein]-C-terminal-N-(1-carboxy-5-phosphooxy-5-oxopentan-1-yl)-L-glutamine + ADP. It carries out the reaction [amino-group carrier protein]-C-terminal-gamma-(L-glutamyl)-L-glutamate + ATP = [amino-group carrier protein]-C-terminal-gamma-(5-phospho-L-glutamyl)-L-glutamate + ADP. Its pathway is amino-acid biosynthesis; L-lysine biosynthesis via AAA pathway; L-lysine from L-alpha-aminoadipate (Thermus route): step 2/5. It functions in the pathway amino-acid biosynthesis; L-arginine biosynthesis. In terms of biological role, involved in both the arginine and lysine biosynthetic pathways. Phosphorylates the LysW-bound precursors glutamate (for arginine biosynthesis), respectively alpha-aminoadipate (for lysine biosynthesis). The polypeptide is Putative [LysW]-aminoadipate/[LysW]-glutamate kinase (Caldivirga maquilingensis (strain ATCC 700844 / DSM 13496 / JCM 10307 / IC-167)).